The following is a 117-amino-acid chain: Immunoglobulin lambda variable 7-46 (117 aa).

The first 19 residues, 1–19 (MAWTPLFLFLLTCCPGSNS), serve as a signal peptide directing secretion. The segment at 20–44 (QAVVTQEPSLTVSPGGTVTLTCGSS) is framework-1. One can recognise an Ig-like domain in the interval 20–117 (QAVVTQEPSL…YCLLSYSGAR (98 aa)). Cys41 and Cys109 are disulfide-bonded. Residues 45 to 53 (TGAVTSGHY) are complementarity-determining-1. The framework-2 stretch occupies residues 54-70 (PYWFQQKPGQAPRTLIY). Residues 71–73 (DTS) are complementarity-determining-2. A framework-3 region spans residues 74-109 (NKHSWTPARFSGSLLGGKAALTLLGAQPEDEAEYYC). Residues 110 to 117 (LLSYSGAR) are complementarity-determining-3.

Immunoglobulins are composed of two identical heavy chains and two identical light chains; disulfide-linked.

The protein resides in the secreted. Its subcellular location is the cell membrane. V region of the variable domain of immunoglobulin light chains that participates in the antigen recognition. Immunoglobulins, also known as antibodies, are membrane-bound or secreted glycoproteins produced by B lymphocytes. In the recognition phase of humoral immunity, the membrane-bound immunoglobulins serve as receptors which, upon binding of a specific antigen, trigger the clonal expansion and differentiation of B lymphocytes into immunoglobulins-secreting plasma cells. Secreted immunoglobulins mediate the effector phase of humoral immunity, which results in the elimination of bound antigens. The antigen binding site is formed by the variable domain of one heavy chain, together with that of its associated light chain. Thus, each immunoglobulin has two antigen binding sites with remarkable affinity for a particular antigen. The variable domains are assembled by a process called V-(D)-J rearrangement and can then be subjected to somatic hypermutations which, after exposure to antigen and selection, allow affinity maturation for a particular antigen. This is Immunoglobulin lambda variable 7-46 from Homo sapiens (Human).